A 375-amino-acid chain; its full sequence is Serpin B5 (375 aa).

4 N-linked (GlcNAc...) asparagine glycosylation sites follow: Asn-99, Asn-133, Asn-188, and Asn-361.

This sequence belongs to the serpin family. Ov-serpin subfamily. In terms of assembly, interacts with IRF6. In terms of tissue distribution, normal mammary epithelial cells.

It is found in the secreted. Its subcellular location is the extracellular space. Its function is as follows. Tumor suppressor. It blocks the growth, invasion, and metastatic properties of mammary tumors. As it does not undergo the S (stressed) to R (relaxed) conformational transition characteristic of active serpins, it exhibits no serine protease inhibitory activity. The polypeptide is Serpin B5 (SERPINB5) (Homo sapiens (Human)).